Consider the following 174-residue polypeptide: Bifunctional protein PyrR (174 aa).

Residues 38–39, 95–103, and arginine 128 each bind substrate; these read SG and DDVLATGRT. The PRPP-binding motif lies at 91–103; it reads ILLVDDVLATGRT.

Belongs to the purine/pyrimidine phosphoribosyltransferase family. PyrR subfamily.

It catalyses the reaction UMP + diphosphate = 5-phospho-alpha-D-ribose 1-diphosphate + uracil. Its function is as follows. Regulates the transcription of the pyrimidine nucleotide (pyr) operon in response to exogenous pyrimidines. Functionally, also displays a weak uracil phosphoribosyltransferase activity which is not physiologically significant. The polypeptide is Bifunctional protein PyrR (Ralstonia nicotianae (strain ATCC BAA-1114 / GMI1000) (Ralstonia solanacearum)).